A 315-amino-acid chain; its full sequence is MSHSLRIIFAGTPDFAARHLDALLSSEHQIVGVFTQPDRPAGRGKKLMPSPVKVLAEAHDVPVFQPSSLRPQENQQLVADLGADIMVVVAYGLILPKAVLEMPRLGCINVHGSLLPRWRGAAPIQRSLWAGDSETGVTIMQMDVGLDTGDMLYKLSCPITAEDTSGSLYDKLADLGPQGLLTTLAQLANGTAQPEVQDESLVSYAEKLSKEEARIDWSLSAAQLERCIRAFNPWPMSWLEIDGQPVKVWRASVIAEVTHAEPGTIVAATKQGIQVATGDGILSLESLQPAGKKAMSSQDLLNSRREWFIPGTRLA.

113–116 (SLLP) is a (6S)-5,6,7,8-tetrahydrofolate binding site.

It belongs to the Fmt family.

It catalyses the reaction L-methionyl-tRNA(fMet) + (6R)-10-formyltetrahydrofolate = N-formyl-L-methionyl-tRNA(fMet) + (6S)-5,6,7,8-tetrahydrofolate + H(+). Functionally, attaches a formyl group to the free amino group of methionyl-tRNA(fMet). The formyl group appears to play a dual role in the initiator identity of N-formylmethionyl-tRNA by promoting its recognition by IF2 and preventing the misappropriation of this tRNA by the elongation apparatus. This is Methionyl-tRNA formyltransferase from Klebsiella pneumoniae (strain 342).